The sequence spans 490 residues: MYHGMNPSNGDGFLEQQQQQQQPQSPQRLLAVILWFQLALCFGPAQLTGGFDDLQVCADPGIPENGFRTPSGGVFFEGSVARFHCQDGFKLKGATKRLCLKHFNGTLGWIPSDNSICVQEDCRIPQIEDAEIHNKTYRHGEKLIITCHEGFKIRYPDLHNMVSLCRDDGTWNNLPICQGCLRPLASSNGYVNISELQTSFPVGTVISYRCFPGFKLDGSAYLECLQNLIWSSSPPRCLALEVCPLPPMVSHGDFVCHPRPCERYNHGTVVEFYCDPGYSLTSDYKYITCQYGEWFPSYQVYCIKSEQTWPSTHETLLTTWKIVAFTATSVLLVLLLVILARMFQTKFKAHFPPRGPPRSSSSDPDFVVVDGVPVMLPSYDEAVSGGLSALGPGYMASVGQGCPLPVDDQSPPAYPGSGDTDTGPGESETCDSVSGSSELLQSLYSPPRCQESTHPASDNPDIIASTAEEVASTSPGIDIADEIPLMEEDP.

A disordered region spans residues 1–21; the sequence is MYHGMNPSNGDGFLEQQQQQQ. Residues 1-41 form the signal peptide; it reads MYHGMNPSNGDGFLEQQQQQQQPQSPQRLLAVILWFQLALC. The Extracellular segment spans residues 42–319; that stretch reads FGPAQLTGGF…PSTHETLLTT (278 aa). 4 Sushi domains span residues 55-119, 120-179, 178-239, and 241-304; these read QVCA…ICVQ, EDCR…ICQG, QGCL…RCLA, and EVCP…YCIK. Disulfide bonds link Cys57/Cys99, Cys85/Cys117, Cys122/Cys165, Cys147/Cys177, Cys180/Cys224, Cys210/Cys237, Cys243/Cys289, and Cys274/Cys302. 2 N-linked (GlcNAc...) asparagine glycosylation sites follow: Asn104 and Asn134. N-linked (GlcNAc...) asparagine glycosylation occurs at Asn192. A helical transmembrane segment spans residues 320–340; sequence WKIVAFTATSVLLVLLLVILA. The Cytoplasmic portion of the chain corresponds to 341–490; that stretch reads RMFQTKFKAH…DEIPLMEEDP (150 aa). The tract at residues 401–490 is disordered; the sequence is GCPLPVDDQS…DEIPLMEEDP (90 aa). The span at 430 to 456 shows a compositional bias: polar residues; it reads CDSVSGSSELLQSLYSPPRCQESTHPA. Positions 479–490 are enriched in acidic residues; the sequence is IADEIPLMEEDP.

Isoform 3 is the predominant isoform in all tissues except cortex, cerebellum, kidney, and breast. Isoform 1 is found primarily in the esophagus and the brain.

Its subcellular location is the membrane. It is found in the secreted. In terms of biological role, acts as a complement inhibitor by disrupting the formation of the classical C3 convertase. Isoform 3 inhibits the classical complement pathway, while membrane-bound isoform 1 inhibits deposition of C3b via both the classical and alternative complement pathways. In Homo sapiens (Human), this protein is Sushi domain-containing protein 4 (SUSD4).